The chain runs to 383 residues: Delta(12) fatty acid desaturase FAD2 (383 aa).

A disordered region spans residues 1–29; sequence MGAGGRMQDPTNGGNKTEPEPIQRVPHEK. Residues 17 to 29 are compositionally biased toward basic and acidic residues; sequence TEPEPIQRVPHEK. Helical transmembrane passes span 50 to 70 and 85 to 105; these read VIRS…LYYI and VAWP…WVIA. Residues 106-110 carry the Histidine box-1 motif; the sequence is HECGH. Residues 118 to 138 form a helical membrane-spanning segment; the sequence is WLDDTVGLVLHSFLLVPYFSW. The Histidine box-2 motif lies at 142–146; the sequence is HRRHH. Helical transmembrane passes span 180–200, 226–246, and 252–272; these read ILTL…FNVS, IFIS…LAMT, and VLTM…LITF. The Histidine box-3 signature appears at 316-320; the sequence is HVAHH.

The protein belongs to the fatty acid desaturase type 1 family. As to expression, expressed in leaves, flower buds and developing seeds.

The protein localises to the membrane. Its pathway is lipid metabolism; polyunsaturated fatty acid biosynthesis. In terms of biological role, catalyzes the desaturation of oleic acid to linoleic acid. Introduces a double bond at position 12 of 16:1(9Z) and 18:1(9Z). The sequence is that of Delta(12) fatty acid desaturase FAD2 from Calendula officinalis (Pot marigold).